The primary structure comprises 553 residues: Transcription factor 7-like 1 (553 aa).

Residues 1–11 (MPQLNSGGGDE) show a composition bias toward gly residues. The segment at 1-61 (MPQLNSGGGD…SENHSSDSDS (61 aa)) is interaction with CTNNB1. Disordered regions lie at residues 1–77 (MPQL…EKPR), 183–213 (GTPP…PYYP), and 392–474 (SARD…LTTK). Composition is skewed to basic and acidic residues over residues 17-32 (ELIR…EKSP) and 52-77 (SENH…EKPR). Positions 109–312 (LGGHYLPNGA…SPNLITKPSV (204 aa)) are interaction with AES and TLE4. The segment at residues 324-392 (IKKPLNAFML…LHSQLYPTWS (69 aa)) is a DNA-binding region (HMG box). Over residues 407-416 (KQSPEMEITK) the composition is skewed to basic and acidic residues. The interval 408 to 553 (QSPEMEITKT…PLSLVTKSSD (146 aa)) is interaction with CTBP. Residues 444 to 463 (SPATPSAALASPAAPAATHS) are compositionally biased toward low complexity. Positions 464-473 (EQAQPLSLTT) are enriched in polar residues.

This sequence belongs to the TCF/LEF family. Interacts with csnk1e, ctnnb1, ctbp, dact1 and gsk3b. May interact with ase and tle4. Phosphorylated. Phosphorylation by csnk1e promotes binding to ctnnb1 while phosphorylation by gsk3b may reverse this effect.

It is found in the nucleus. Functionally, participates in the Wnt signaling pathway. Binds to DNA and acts as a repressor in the absence of ctnnb1, and as an activator in its presence. Required early in development for the establishment of the dorsal body axis in response to maternal Wnt signaling. The polypeptide is Transcription factor 7-like 1 (tcf7l1) (Xenopus tropicalis (Western clawed frog)).